Reading from the N-terminus, the 579-residue chain is Peptidoglycan D,D-transpeptidase FtsI (579 aa).

A helical transmembrane segment spans residues 15 to 35 (FCVIVGLLLAMVGAIVWRIVD). The Acyl-ester intermediate role is filled by Ser294. The tract at residues 558–579 (DNLPTATEQQQVNAAPAKGGRG) is disordered. Polar residues predominate over residues 561–570 (PTATEQQQVN).

Belongs to the transpeptidase family. FtsI subfamily.

The protein localises to the cell inner membrane. The catalysed reaction is Preferential cleavage: (Ac)2-L-Lys-D-Ala-|-D-Ala. Also transpeptidation of peptidyl-alanyl moieties that are N-acyl substituents of D-alanine.. The protein operates within cell wall biogenesis; peptidoglycan biosynthesis. Its function is as follows. Catalyzes cross-linking of the peptidoglycan cell wall at the division septum. Binds penicillin. The protein is Peptidoglycan D,D-transpeptidase FtsI of Pseudomonas aeruginosa (strain ATCC 15692 / DSM 22644 / CIP 104116 / JCM 14847 / LMG 12228 / 1C / PRS 101 / PAO1).